Here is a 427-residue protein sequence, read N- to C-terminus: Histidinol dehydrogenase (427 aa).

Ser-232, Gln-254, and His-257 together coordinate substrate. 2 residues coordinate Zn(2+): Gln-254 and His-257. Catalysis depends on proton acceptor residues Glu-322 and His-323. Substrate is bound by residues His-323, Asp-356, Glu-410, and His-415. Asp-356 provides a ligand contact to Zn(2+). His-415 serves as a coordination point for Zn(2+).

This sequence belongs to the histidinol dehydrogenase family. Zn(2+) is required as a cofactor.

The enzyme catalyses L-histidinol + 2 NAD(+) + H2O = L-histidine + 2 NADH + 3 H(+). Its pathway is amino-acid biosynthesis; L-histidine biosynthesis; L-histidine from 5-phospho-alpha-D-ribose 1-diphosphate: step 9/9. Functionally, catalyzes the sequential NAD-dependent oxidations of L-histidinol to L-histidinaldehyde and then to L-histidine. The protein is Histidinol dehydrogenase of Listeria monocytogenes serovar 1/2a (strain ATCC BAA-679 / EGD-e).